The chain runs to 423 residues: Imidazolonepropionase (423 aa).

Residues His78 and His80 each coordinate Fe(3+). The Zn(2+) site is built by His78 and His80. Arg87, Tyr150, and His183 together coordinate 4-imidazolone-5-propanoate. Tyr150 serves as a coordination point for N-formimidoyl-L-glutamate. Position 247 (His247) interacts with Fe(3+). Residue His247 coordinates Zn(2+). Glu250 contacts 4-imidazolone-5-propanoate. Position 322 (Asp322) interacts with Fe(3+). Asp322 is a Zn(2+) binding site. Residues Asn324 and Gly326 each coordinate N-formimidoyl-L-glutamate. Residue Ser327 coordinates 4-imidazolone-5-propanoate.

The protein belongs to the metallo-dependent hydrolases superfamily. HutI family. Zn(2+) is required as a cofactor. It depends on Fe(3+) as a cofactor.

The protein resides in the cytoplasm. The catalysed reaction is 4-imidazolone-5-propanoate + H2O = N-formimidoyl-L-glutamate. It participates in amino-acid degradation; L-histidine degradation into L-glutamate; N-formimidoyl-L-glutamate from L-histidine: step 3/3. In terms of biological role, catalyzes the hydrolytic cleavage of the carbon-nitrogen bond in imidazolone-5-propanoate to yield N-formimidoyl-L-glutamate. It is the third step in the universal histidine degradation pathway. This is Imidazolonepropionase from Bacillus cereus (strain B4264).